Here is a 362-residue protein sequence, read N- to C-terminus: Phosphatidylserine decarboxylase proenzyme (362 aa).

A helical membrane pass occupies residues Y26–Y44. Catalysis depends on charge relay system; for autoendoproteolytic cleavage activity residues D147, H206, and S316. The Schiff-base intermediate with substrate; via pyruvic acid; for decarboxylase activity role is filled by S316. Residue S316 is modified to Pyruvic acid (Ser); by autocatalysis.

It belongs to the phosphatidylserine decarboxylase family. PSD-B subfamily. Eukaryotic type I sub-subfamily. Heterodimer of a large membrane-associated beta subunit and a small pyruvoyl-containing alpha subunit. The cofactor is pyruvate. Is synthesized initially as an inactive proenzyme. Formation of the active enzyme involves a self-maturation process in which the active site pyruvoyl group is generated from an internal serine residue via an autocatalytic post-translational modification. Two non-identical subunits are generated from the proenzyme in this reaction, and the pyruvate is formed at the N-terminus of the alpha chain, which is derived from the carboxyl end of the proenzyme. The autoendoproteolytic cleavage occurs by a canonical serine protease mechanism, in which the side chain hydroxyl group of the serine supplies its oxygen atom to form the C-terminus of the beta chain, while the remainder of the serine residue undergoes an oxidative deamination to produce ammonia and the pyruvoyl prosthetic group on the alpha chain. During this reaction, the Ser that is part of the protease active site of the proenzyme becomes the pyruvoyl prosthetic group, which constitutes an essential element of the active site of the mature decarboxylase.

It localises to the endoplasmic reticulum membrane. It carries out the reaction a 1,2-diacyl-sn-glycero-3-phospho-L-serine + H(+) = a 1,2-diacyl-sn-glycero-3-phosphoethanolamine + CO2. The protein operates within phospholipid metabolism; phosphatidylethanolamine biosynthesis; phosphatidylethanolamine from CDP-diacylglycerol: step 2/2. Catalyzes the formation of phosphatidylethanolamine (PtdEtn) from phosphatidylserine (PtdSer). Plays a central role in phospholipid metabolism and in the interorganelle trafficking of phosphatidylserine. The polypeptide is Phosphatidylserine decarboxylase proenzyme (Plasmodium falciparum).